The sequence spans 635 residues: Early transcription factor 70 kDa subunit (635 aa).

The Helicase ATP-binding domain maps to 32-185 (RSIIDENKSV…SNIISLMSDE (154 aa)). Residue 45–52 (HIMGSGKT) coordinates ATP. Positions 135-138 (DEAH) match the DEXH box motif. A Helicase C-terminal domain is found at 326–505 (KFKYFINKIE…TLPFDIKKLL (180 aa)).

This sequence belongs to the helicase family. VETF subfamily. Heterodimer of a 70 kDa and a 82 kDa subunit. Part of the early transcription complex composed of ETF, RAP94, and the DNA-directed RNA polymerase.

The protein localises to the virion. Functionally, acts with RNA polymerase to initiate transcription from early gene promoters. Is recruited by the RPO-associated protein of 94 kDa (RAP94) to form the early transcription complex, which also contains the core RNA polymerase. ETF heterodimer binds to early gene promoters. The chain is Early transcription factor 70 kDa subunit (VETFS) from Oryctolagus cuniculus (Rabbit).